We begin with the raw amino-acid sequence, 79 residues long: Large ribosomal subunit protein bL31 (79 aa).

It belongs to the bacterial ribosomal protein bL31 family. Type A subfamily. As to quaternary structure, part of the 50S ribosomal subunit.

Its function is as follows. Binds the 23S rRNA. The polypeptide is Large ribosomal subunit protein bL31 (Nostoc sp. (strain PCC 7120 / SAG 25.82 / UTEX 2576)).